Reading from the N-terminus, the 617-residue chain is Vitamin B12 transporter BtuB (617 aa).

Residues 1 to 22 (MRKTFLAITCASLLSPTFYSQA) form the signal peptide. The short motif at 29 to 36 (ETVVVTAN) is the TonB box element. The region spanning 40–154 (QIDGAVLAQT…ISGVINIITR (115 aa)) is the TBDR plug domain. Residues 159–617 (DDSGRVSAGY…QYFVSADYRF (459 aa)) enclose the TBDR beta-barrel domain. A TonB C-terminal box motif is present at residues 600 to 617 (VGYVTPGRQYFVSADYRF).

Belongs to the TonB-dependent receptor family. BtuB (TC 1.B.14.3.1) subfamily.

The protein resides in the cell outer membrane. Its function is as follows. Involved in the active translocation of vitamin B12 (cyanocobalamin) across the outer membrane to the periplasmic space. It derives its energy for transport by interacting with the trans-periplasmic membrane protein TonB. This Vibrio campbellii (strain ATCC BAA-1116) protein is Vitamin B12 transporter BtuB.